The sequence spans 361 residues: Cdc42 effector protein 1 (361 aa).

A disordered region spans residues 1-29; sequence MPGPQGAGGAPAMNLGKLSPVGWVSSSQG. A phosphoserine mark is found at S19 and S27. Phosphothreonine is present on T34. Residues 38–52 form the CRIB domain; it reads ISPPLGDFRHTMHVG. The residue at position 39 (S39) is a Phosphoserine. The residue at position 53 (R53) is an Omega-N-methylarginine. 11 positions are modified to phosphoserine: S65, S73, S77, S101, S113, S121, S139, S180, S190, S192, and S195. Residues 161–186 are disordered; that stretch reads CTISRLPRPEKPRDRDRDSSFPAEPE. The span at 167-186 shows a compositional bias: basic and acidic residues; the sequence is PRPEKPRDRDRDSSFPAEPE. Disordered regions lie at residues 218–300 and 320–361; these read EGSA…SRHH and SWGS…EVKV. Tandem repeats lie at residues 220 to 226, 229 to 235, 236 to 242, and 243 to 249. A 4 X 7 AA tandem repeats of [PT]-[AT]-A-[ENT]-[PT]-[PTS]-[AG] region spans residues 220–249; the sequence is SAAETPAPAPAASPPASVANPPAPASSPSL. A phosphoserine mark is found at S270, S320, and S323. A compositionally biased stretch (polar residues) spans 332–347; sequence QAGSRTPVPSTVQANT. The span at 351-361 shows a compositional bias: acidic residues; that stretch reads ADAEEDDEVKV.

The protein belongs to the BORG/CEP family. Interacts with RHOQ and CDC42, in a GTP-dependent manner.

The protein localises to the endomembrane system. It is found in the cytoplasm. The protein resides in the cytoskeleton. Probably involved in the organization of the actin cytoskeleton. Induced membrane extensions in fibroblasts. The polypeptide is Cdc42 effector protein 1 (Bos taurus (Bovine)).